The sequence spans 94 residues: uncharacterized protein (94 aa).

It belongs to the phage portal family. HK97 subfamily.

This is an uncharacterized protein from Rickettsia conorii (strain ATCC VR-613 / Malish 7).